The primary structure comprises 394 residues: Nicotinate phosphoribosyltransferase (394 aa).

H218 bears the Phosphohistidine; by autocatalysis mark.

It belongs to the NAPRTase family. In terms of processing, transiently phosphorylated on a His residue during the reaction cycle. Phosphorylation strongly increases the affinity for substrates and increases the rate of nicotinate D-ribonucleotide production. Dephosphorylation regenerates the low-affinity form of the enzyme, leading to product release.

It catalyses the reaction nicotinate + 5-phospho-alpha-D-ribose 1-diphosphate + ATP + H2O = nicotinate beta-D-ribonucleotide + ADP + phosphate + diphosphate. It participates in cofactor biosynthesis; NAD(+) biosynthesis; nicotinate D-ribonucleotide from nicotinate: step 1/1. Its function is as follows. Catalyzes the synthesis of beta-nicotinate D-ribonucleotide from nicotinate and 5-phospho-D-ribose 1-phosphate at the expense of ATP. This chain is Nicotinate phosphoribosyltransferase, found in Xylella fastidiosa (strain 9a5c).